Here is a 738-residue protein sequence, read N- to C-terminus: Wall-associated receptor kinase 4 (738 aa).

The N-terminal stretch at 1–22 (MKVQRLFLVAIFCLSYMQLVKG) is a signal peptide. Topologically, residues 23-335 (QTLPRCPEKC…PKGNPEYVEW (313 aa)) are extracellular. N-linked (GlcNAc...) asparagine glycans are attached at residues Asn-34, Asn-56, Asn-109, Asn-115, Asn-132, Asn-182, and Asn-208. The 47-residue stretch at 232-278 (RGETCGQVGEKKCGVNGICSNSASGIGYTCKCKGGFQGNPYLQNGCQ) folds into the EGF-like 1 domain. 6 disulfides stabilise this stretch: Cys-236-Cys-250, Cys-244-Cys-261, Cys-263-Cys-277, Cys-283-Cys-300, Cys-294-Cys-309, and Cys-311-Cys-324. In terms of domain architecture, EGF-like 2; calcium-binding spans 279 to 325 (DINECTTANPIHKHNCSGDSTCENKLGHFRCNCRSRYELNTTTNTCK). A glycan (N-linked (GlcNAc...) asparagine) is linked at Asn-293. Asn-318 carries N-linked (GlcNAc...) asparagine glycosylation. A helical transmembrane segment spans residues 336 to 356 (TTIVLGTTIGFLVILLAISCI). Residues 357–738 (EHKMKNTKDT…VAILDIEAGR (382 aa)) lie on the Cytoplasmic side of the membrane. Position 399 is a phosphothreonine (Thr-399). Residues 410-693 (YDENRILGQG…RVTKTKHKWS (284 aa)) enclose the Protein kinase domain. Residues 416–424 (LGQGGQGTV) and Lys-438 contribute to the ATP site. Tyr-483 carries the post-translational modification Phosphotyrosine. Asp-535 functions as the Proton acceptor in the catalytic mechanism. Residues Thr-569 and Thr-574 each carry the phosphothreonine modification. Tyr-582 bears the Phosphotyrosine mark.

It belongs to the protein kinase superfamily. Ser/Thr protein kinase family. In terms of tissue distribution, strictly expressed in siliques.

It is found in the membrane. The enzyme catalyses L-seryl-[protein] + ATP = O-phospho-L-seryl-[protein] + ADP + H(+). It carries out the reaction L-threonyl-[protein] + ATP = O-phospho-L-threonyl-[protein] + ADP + H(+). Its function is as follows. Serine/threonine-protein kinase that may function as a signaling receptor of extracellular matrix component. Binding to pectin may have significance in the control of cell expansion, morphogenesis and development. This Arabidopsis thaliana (Mouse-ear cress) protein is Wall-associated receptor kinase 4 (WAK4).